Here is a 522-residue protein sequence, read N- to C-terminus: Calcium-dependent protein kinase 4 (522 aa).

Positions 1-10 (MGACFSSHTA) are enriched in polar residues. Residues 1–43 (MGACFSSHTATAAADGGSGKRQQRKGDHKGKLPDGGGGEKEKE) are disordered. The N-myristoyl glycine moiety is linked to residue glycine 2. Positions 29 to 43 (KGKLPDGGGGEKEKE) are enriched in basic and acidic residues. A Protein kinase domain is found at 59–319 (YQVGRLLGHG…AAQALSHPWV (261 aa)). ATP is bound by residues 65-73 (LGHGQFGYT) and lysine 88. The active-site Proton acceptor is the aspartate 185. Residues 325–355 (ASEIPVDISVLSNMRQFVKYSRFKQFALRAL) are autoinhibitory domain. EF-hand domains are found at residues 362–397 (EELA…DLPW), 399–434 (LKGP…IHQM), 441–476 (RWGL…GLKG), and 481–508 (LLEE…ASMS). Aspartate 375, aspartate 377, serine 379, serine 381, glutamate 386, aspartate 412, asparagine 414, aspartate 416, glutamate 423, aspartate 454, aspartate 456, aspartate 458, tyrosine 460, glutamate 465, aspartate 486, aspartate 488, aspartate 490, arginine 492, and glutamate 497 together coordinate Ca(2+).

The protein belongs to the protein kinase superfamily. Ser/Thr protein kinase family. CDPK subfamily.

It localises to the membrane. The catalysed reaction is L-seryl-[protein] + ATP = O-phospho-L-seryl-[protein] + ADP + H(+). It carries out the reaction L-threonyl-[protein] + ATP = O-phospho-L-threonyl-[protein] + ADP + H(+). Its activity is regulated as follows. Activated by calcium. Autophosphorylation may play an important role in the regulation of the kinase activity. In terms of biological role, may play a role in signal transduction pathways that involve calcium as a second messenger. This Oryza sativa subsp. japonica (Rice) protein is Calcium-dependent protein kinase 4.